A 154-amino-acid chain; its full sequence is Small ribosomal subunit protein uS15 (154 aa).

Over residues 1 to 10 (MARMHSRRRG) the composition is skewed to basic residues. The tract at residues 1 to 32 (MARMHSRRRGSSGSDRPTADEPPEWSEVDEDA) is disordered. The segment covering 21-32 (EPPEWSEVDEDA) has biased composition (acidic residues).

The protein belongs to the universal ribosomal protein uS15 family. As to quaternary structure, part of the 30S ribosomal subunit.

The sequence is that of Small ribosomal subunit protein uS15 from Natronomonas pharaonis (strain ATCC 35678 / DSM 2160 / CIP 103997 / JCM 8858 / NBRC 14720 / NCIMB 2260 / Gabara) (Halobacterium pharaonis).